Reading from the N-terminus, the 320-residue chain is ATP-dependent 6-phosphofructokinase (320 aa).

Glycine 12 lines the ATP pocket. 22-26 (RGVVR) serves as a coordination point for ADP. ATP is bound by residues 73-74 (RF) and 103-106 (GDGS). Aspartate 104 lines the Mg(2+) pocket. 126–128 (TID) lines the substrate pocket. Aspartate 128 functions as the Proton acceptor in the catalytic mechanism. Arginine 155 contributes to the ADP binding site. Substrate is bound by residues arginine 163 and 170-172 (MGR). ADP is bound by residues 186–188 (GCE), lysine 212, and 214–216 (KKH). Substrate is bound by residues glutamate 223, arginine 244, and 250 to 253 (HIQR).

The protein belongs to the phosphofructokinase type A (PFKA) family. ATP-dependent PFK group I subfamily. Prokaryotic clade 'B1' sub-subfamily. As to quaternary structure, homotetramer. Mg(2+) is required as a cofactor.

It localises to the cytoplasm. It carries out the reaction beta-D-fructose 6-phosphate + ATP = beta-D-fructose 1,6-bisphosphate + ADP + H(+). The protein operates within carbohydrate degradation; glycolysis; D-glyceraldehyde 3-phosphate and glycerone phosphate from D-glucose: step 3/4. Allosterically activated by ADP and other diphosphonucleosides, and allosterically inhibited by phosphoenolpyruvate. Functionally, catalyzes the phosphorylation of D-fructose 6-phosphate to fructose 1,6-bisphosphate by ATP, the first committing step of glycolysis. The protein is ATP-dependent 6-phosphofructokinase of Aliivibrio fischeri (strain ATCC 700601 / ES114) (Vibrio fischeri).